A 415-amino-acid polypeptide reads, in one-letter code: Multidrug resistance protein MdtA (415 aa).

Positions Met-1–Ala-21 are cleaved as a signal peptide. 2 disordered regions span residues Ser-32–Ala-60 and Glu-392–Ser-415. Residues Pro-399–Ser-415 are compositionally biased toward basic and acidic residues.

This sequence belongs to the membrane fusion protein (MFP) (TC 8.A.1) family. As to quaternary structure, part of a tripartite efflux system composed of MdtA, MdtB and MdtC.

Its subcellular location is the cell inner membrane. In terms of biological role, the MdtABC tripartite complex confers resistance against novobiocin and deoxycholate. This is Multidrug resistance protein MdtA from Escherichia coli (strain K12 / MC4100 / BW2952).